An 82-amino-acid chain; its full sequence is UPF0213 protein MW0443 (82 aa).

One can recognise a GIY-YIG domain in the interval 2-77 (DSHFVYIVKC…KTYTRQKKLR (76 aa)).

Belongs to the UPF0213 family.

This chain is UPF0213 protein MW0443, found in Staphylococcus aureus (strain MW2).